Consider the following 151-residue polypeptide: MALYEHVLLARQDISQQQVDALVEQYKGVLEANGGKVGKVESWGLRPLTYRIKKNRKAYYTLVNIDAPAAAVAEMERQMRINEDVLRFLTVRVEEHEEGQSAMLTRRDDRRERDGDDRPRRREGGFDRGDRGDRGDRGPRRPRDNEAGEGA.

Positions 96 to 151 (HEEGQSAMLTRRDDRRERDGDDRPRRREGGFDRGDRGDRGDRGPRRPRDNEAGEGA) are disordered.

The protein belongs to the bacterial ribosomal protein bS6 family.

Its function is as follows. Binds together with bS18 to 16S ribosomal RNA. The polypeptide is Small ribosomal subunit protein bS6 (Brucella anthropi (strain ATCC 49188 / DSM 6882 / CCUG 24695 / JCM 21032 / LMG 3331 / NBRC 15819 / NCTC 12168 / Alc 37) (Ochrobactrum anthropi)).